A 293-amino-acid chain; its full sequence is Ribosomal protein L11 methyltransferase (293 aa).

4 residues coordinate S-adenosyl-L-methionine: Thr-145, Gly-166, Asp-188, and Asn-230.

The protein belongs to the methyltransferase superfamily. PrmA family.

The protein localises to the cytoplasm. The enzyme catalyses L-lysyl-[protein] + 3 S-adenosyl-L-methionine = N(6),N(6),N(6)-trimethyl-L-lysyl-[protein] + 3 S-adenosyl-L-homocysteine + 3 H(+). Methylates ribosomal protein L11. This is Ribosomal protein L11 methyltransferase from Serratia proteamaculans (strain 568).